We begin with the raw amino-acid sequence, 318 residues long: uncharacterized protein (318 aa).

This is an uncharacterized protein from Autographa californica nuclear polyhedrosis virus (AcMNPV).